The sequence spans 535 residues: MANLDLSKYGIVDVKEIVHNPSYDVLFAEETKPSLEGFEKGQVTELGAVNVMTGIYTGRSPKDKFFVKNEASEDSVWWTSDEYKNDNKPCSEAAWADLKAKAVKELSGKRLFVVDTFCGANEATRLKVRFIMEVAWQAHFVTNMFIRPTAEELANYGEPDFVSFNAAKAKVDNYKELGLNSETATVFNLKTKEQVILNTWYGGEMKKGIFSIMNYLNPLRGIASMHCSANTDKEGKSSAIFFGLSGTGKTTLSTDPKRLLIGDDEHGWDNEGVFNYEGGCYAKVINLDKESEPDIYNAIKRDALLENVTVAADGKIDFADKSVTENTRVSYPIYHIENIVKPVSKGPHAKQVIFLSADAFGVLPPVSILTPEQTQYYFLSGFTAKLAGTERGITEPTPTFSACFGAAFLSLHPTKYGEELVKKMEMTGAKAYLVNTGWNGSGKRISIKDTRGIIDAILDGSINEAPTKKIPYFDFEVPTALPGVDPKILDPRDTYADPAQWDEKAKDLAARFQKNFAKFTGNEAGKALVAAGPQL.

Residues Arg59, Tyr201, and Lys207 each contribute to the substrate site. Residues Lys207, His226, and 243–251 each bind ATP; that span reads GLSGTGKTT. 2 residues coordinate Mn(2+): Lys207 and His226. Asp264 contributes to the Mn(2+) binding site. Residues Glu292, Arg328, 444-445, and Thr450 each bind ATP; that span reads RI. Residue Arg328 coordinates substrate.

Belongs to the phosphoenolpyruvate carboxykinase (ATP) family. Mn(2+) serves as cofactor.

It is found in the cytoplasm. It catalyses the reaction oxaloacetate + ATP = phosphoenolpyruvate + ADP + CO2. Its pathway is carbohydrate biosynthesis; gluconeogenesis. Its function is as follows. Involved in the gluconeogenesis. Catalyzes the conversion of oxaloacetate (OAA) to phosphoenolpyruvate (PEP) through direct phosphoryl transfer between the nucleoside triphosphate and OAA. The chain is Phosphoenolpyruvate carboxykinase (ATP) from Parabacteroides distasonis (strain ATCC 8503 / DSM 20701 / CIP 104284 / JCM 5825 / NCTC 11152).